Reading from the N-terminus, the 68-residue chain is Protein transport protein Sec61 subunit gamma (68 aa).

The Cytoplasmic portion of the chain corresponds to 1–32 (MDQIMQFVEPSRQFVKDSIRLVKRCTKPDRKE). A helical membrane pass occupies residues 33–61 (FQKIAMATAIGFAIMGFIGFFVKLIHIPI). At 62–68 (NNIIVGG) the chain is on the extracellular side.

It belongs to the SecE/SEC61-gamma family. As to quaternary structure, the SEC61 channel-forming translocon complex consists of channel-forming core components SEC61A1, SEC61B and SEC61G and different auxiliary components such as SEC62 and SEC63. The SEC61 channel associates with the multi-pass translocon (MPT) complex.

The protein localises to the endoplasmic reticulum membrane. Functionally, component of SEC61 channel-forming translocon complex that mediates transport of signal peptide-containing precursor polypeptides across the endoplasmic reticulum (ER). Forms a ribosome receptor and a gated pore in the ER membrane, both functions required for cotranslational translocation of nascent polypeptides. The SEC61 channel is also involved in ER membrane insertion of transmembrane proteins: it mediates membrane insertion of the first few transmembrane segments of proteins, while insertion of subsequent transmembrane regions of multi-pass membrane proteins is mediated by the multi-pass translocon (MPT) complex. This Gadus morhua (Atlantic cod) protein is Protein transport protein Sec61 subunit gamma (sec61g).